The primary structure comprises 402 residues: GTPase Obg (402 aa).

The Obg domain maps to Met-1–Val-159. The 175-residue stretch at Ala-160–Glu-334 folds into the OBG-type G domain. GTP contacts are provided by residues Gly-166–Ser-173, Phe-191–Val-195, Asp-213–Gly-216, Asn-283–Asp-286, and Ser-315–Leu-317. Mg(2+)-binding residues include Ser-173 and Thr-193. Residues Ala-382–Pro-402 form a disordered region. The segment covering Glu-387–Val-396 has biased composition (acidic residues).

This sequence belongs to the TRAFAC class OBG-HflX-like GTPase superfamily. OBG GTPase family. In terms of assembly, monomer. The cofactor is Mg(2+).

It is found in the cytoplasm. Its function is as follows. An essential GTPase which binds GTP, GDP and possibly (p)ppGpp with moderate affinity, with high nucleotide exchange rates and a fairly low GTP hydrolysis rate. Plays a role in control of the cell cycle, stress response, ribosome biogenesis and in those bacteria that undergo differentiation, in morphogenesis control. The polypeptide is GTPase Obg (Psychrobacter sp. (strain PRwf-1)).